The sequence spans 140 residues: ATP synthase epsilon chain (140 aa).

This sequence belongs to the ATPase epsilon chain family. As to quaternary structure, F-type ATPases have 2 components, CF(1) - the catalytic core - and CF(0) - the membrane proton channel. CF(1) has five subunits: alpha(3), beta(3), gamma(1), delta(1), epsilon(1). CF(0) has three main subunits: a, b and c.

It is found in the cell inner membrane. In terms of biological role, produces ATP from ADP in the presence of a proton gradient across the membrane. In Legionella pneumophila (strain Paris), this protein is ATP synthase epsilon chain.